The sequence spans 460 residues: MVKEYKTITQIAGPLVFVEKTEPVGYKEIVTINLPDGTTRRGEVLDSSSDIVVIQIFEGTTGLDKECGVVFTGETLKLPASIDLLGRILSGSGEPLDGGPRIVPDQLLDINGAAMNPYARLPPKDFIQTGISTIDGTNTLVRGQKLPIFSASGLPHNEIALQIARQAAVPGSESAFAVVFAAMGITNEEAQYFMSDFEKTGALERAVVFLNLADDPAVERIVTPRMALTAAEYLAYEHGMHVLVILTDITNYAEALRQMGAARNEIPGRRGYPGYMYTDLATLYERAGIVKGAKGSVTQIPILSMPGDDITHPIPDLSGYITEGQIVVSRELHRKGIYPPINVLPSLSRLMNSGIGAGKTREDHKAVSDQMYAGYAEGRDLRGLVAIVGKEALSERDVKFLEFADLFEQQFVTQGRNENRTIADTLDIGWKILAHLPENQLGRIDNKYIQKYHPAHRKGQ.

The protein belongs to the ATPase alpha/beta chains family. As to quaternary structure, has multiple subunits with at least A(3), B(3), C, D, E, F, H, I and proteolipid K(x).

Its subcellular location is the cell membrane. Component of the A-type ATP synthase that produces ATP from ADP in the presence of a proton gradient across the membrane. The B chain is a regulatory subunit. This Methanosarcina barkeri protein is A-type ATP synthase subunit B.